A 589-amino-acid polypeptide reads, in one-letter code: Proline--tRNA ligase (589 aa).

It belongs to the class-II aminoacyl-tRNA synthetase family. ProS type 1 subfamily. As to quaternary structure, homodimer.

The protein localises to the cytoplasm. The catalysed reaction is tRNA(Pro) + L-proline + ATP = L-prolyl-tRNA(Pro) + AMP + diphosphate. Functionally, catalyzes the attachment of proline to tRNA(Pro) in a two-step reaction: proline is first activated by ATP to form Pro-AMP and then transferred to the acceptor end of tRNA(Pro). As ProRS can inadvertently accommodate and process non-cognate amino acids such as alanine and cysteine, to avoid such errors it has two additional distinct editing activities against alanine. One activity is designated as 'pretransfer' editing and involves the tRNA(Pro)-independent hydrolysis of activated Ala-AMP. The other activity is designated 'posttransfer' editing and involves deacylation of mischarged Ala-tRNA(Pro). The misacylated Cys-tRNA(Pro) is not edited by ProRS. In Gloeobacter violaceus (strain ATCC 29082 / PCC 7421), this protein is Proline--tRNA ligase.